A 392-amino-acid chain; its full sequence is B2 bradykinin receptor (392 aa).

The Extracellular portion of the chain corresponds to 1–61 (MPCSWKLLGF…EWWSWLNAIQ (61 aa)). N-linked (GlcNAc...) asparagine glycosylation is found at N29 and N40. The helical transmembrane segment at 62–85 (APFLWVLFLLAALENLFVLSVFFL) threads the bilayer. Residues 86 to 94 (HKNSCTVAE) are Cytoplasmic-facing. The chain crosses the membrane as a helical span at residues 95–119 (IYLGNLAAADLILACGLPFWAITIA). Residues 120-132 (NNFDWVFGEVLCR) lie on the Extracellular side of the membrane. An intrachain disulfide couples C131 to C212. The chain crosses the membrane as a helical span at residues 133–154 (VVNTMIYMNLYSSICFLMLVSI). The Cytoplasmic portion of the chain corresponds to 155-176 (DRYLALVKTMSMGRMRGVRWAK). Y157 is subject to Phosphotyrosine. The chain crosses the membrane as a helical span at residues 177–199 (LYSLVIWGCTLLLSSPMLVFRTM). Topologically, residues 200–222 (REYSEEGHNVTACVIVYPSRSWE) are extracellular. N-linked (GlcNAc...) asparagine glycosylation occurs at N208. The chain crosses the membrane as a helical span at residues 223–249 (VFTNVLLNLVGFLLPLSVITFCTVRIL). Over 250-268 (QVLRNNEMKKFKEVQTERK) the chain is Cytoplasmic. Residues 269–293 (ATVLVLAVLGLFVLCWVPFQISTFL) form a helical membrane-spanning segment. Topologically, residues 294 to 312 (DTLLRLGVLSGCWDEHAVD) are extracellular. The helical transmembrane segment at 313–336 (VITQISSYVAYSNSGLNPLVYVIV) threads the bilayer. Topologically, residues 337–392 (GKRFRKKSREVYRVLCQKGGCMGEPVQMENSMGTLRTSISVERQIHKLQDWAGKKQ) are cytoplasmic. Y348 is subject to Phosphotyrosine. The S-palmitoyl cysteine moiety is linked to residue C352. S367 carries the post-translational modification Phosphoserine. T370 is modified (phosphothreonine). S374 and S376 each carry phosphoserine; by GRK6.

It belongs to the G-protein coupled receptor 1 family. Bradykinin receptor subfamily. BDKRB2 sub-subfamily. As to quaternary structure, forms a complex with PECAM1 and GNAQ. Interacts with PECAM1.

Its subcellular location is the cell membrane. In terms of biological role, receptor for bradykinin. It is associated with G proteins that activate a phosphatidylinositol-calcium second messenger system. The protein is B2 bradykinin receptor (Bdkrb2) of Mus musculus (Mouse).